The chain runs to 159 residues: Large ribosomal subunit protein mL43 (159 aa).

Residues 123 to 159 (SPSIQGQWHPFTNKPTALGGLRPREVQNPAPTQRPAQ) form a disordered region.

The protein belongs to the mitochondrion-specific ribosomal protein mL43 family. Component of the mitochondrial ribosome large subunit (39S) which comprises a 16S rRNA and about 50 distinct proteins.

Its subcellular location is the mitochondrion. The polypeptide is Large ribosomal subunit protein mL43 (MRPL43) (Bos taurus (Bovine)).